The primary structure comprises 305 residues: Sulfate adenylyltransferase subunit 2 (305 aa).

This sequence belongs to the PAPS reductase family. CysD subfamily. Heterodimer composed of CysD, the smaller subunit, and CysN.

The enzyme catalyses sulfate + ATP + H(+) = adenosine 5'-phosphosulfate + diphosphate. It functions in the pathway sulfur metabolism; hydrogen sulfide biosynthesis; sulfite from sulfate: step 1/3. In terms of biological role, with CysN forms the ATP sulfurylase (ATPS) that catalyzes the adenylation of sulfate producing adenosine 5'-phosphosulfate (APS) and diphosphate, the first enzymatic step in sulfur assimilation pathway. APS synthesis involves the formation of a high-energy phosphoric-sulfuric acid anhydride bond driven by GTP hydrolysis by CysN coupled to ATP hydrolysis by CysD. The chain is Sulfate adenylyltransferase subunit 2 from Pseudomonas fluorescens (strain ATCC BAA-477 / NRRL B-23932 / Pf-5).